The sequence spans 428 residues: Keratin, type I cytoskeletal 18-A (428 aa).

A head region spans residues Ser2–Asn78. The disordered stretch occupies residues Ser24–Gly45. Positions Glu79–His114 are coil 1A. The IF rod domain occupies Glu79–Leu389. The interval Thr115–Thr130 is linker 1. The segment at Ile131 to Leu222 is coil 1B. The tract at residues Gln223–Ile246 is linker 12. Residues Met247–Gly384 form a coil 2 region. The interval Asp385–Ser428 is tail.

It belongs to the intermediate filament family. In terms of assembly, heterotetramer of two type I and two type II keratins. Keratin-18 associates with keratin-8. Post-translationally, proteolytically cleaved by caspases during epithelial cell apoptosis. Expressed at high levels in notochord and low levels in adult liver.

Functionally, when phosphorylated, plays a role in filament reorganization. The sequence is that of Keratin, type I cytoskeletal 18-A (krt18-a) from Xenopus laevis (African clawed frog).